Consider the following 189-residue polypeptide: Elongation factor P (189 aa).

It belongs to the elongation factor P family.

It localises to the cytoplasm. It functions in the pathway protein biosynthesis; polypeptide chain elongation. Involved in peptide bond synthesis. Stimulates efficient translation and peptide-bond synthesis on native or reconstituted 70S ribosomes in vitro. Probably functions indirectly by altering the affinity of the ribosome for aminoacyl-tRNA, thus increasing their reactivity as acceptors for peptidyl transferase. This chain is Elongation factor P, found in Phytoplasma australiense.